Reading from the N-terminus, the 963-residue chain is VPS35 endosomal protein-sorting factor-like (963 aa).

Positions 43–69 (SKTKKVNRKGSTSSTSSSSSSSVVDPL) are disordered. The segment covering 53–69 (STSSTSSSSSSSVVDPL) has biased composition (low complexity). Ser265 carries the post-translational modification Phosphoserine. A helical membrane pass occupies residues 703 to 719 (ACVAYCFITIPSLAGIF).

This sequence belongs to the VPS35L family. As to quaternary structure, component of the heterotrimeric retriever complex formed by VPS26C, VPS29 and VPS35L. Interacts with VPS29. Interacts with COMMD1, CCDC93 and CCDC22; associates with the CCC (COMMD/CCDC22/CCDC93) complex which contains at least COMMD1 (and possibly other COMM domain-containing proteins), CCDC22 and CCDC93. Interacts with WASHC1, WASHC2A and WASHC2C. Interacts with SNX17 and SNX31.

The protein resides in the membrane. Its subcellular location is the endosome. In terms of biological role, acts as a component of the retriever complex. The retriever complex is a heterotrimeric complex related to retromer cargo-selective complex (CSC) and essential for retromer-independent retrieval and recycling of numerous cargos such as integrin alpha-5/beta-1 (ITGA5:ITGB1). The recruitment of the retriever complex to the endosomal membrane involves CCC and WASH complexes. In the endosomes, drives the retrieval and recycling of NxxY-motif-containing cargo proteins by coupling to SNX17, a cargo essential for the homeostatic maintenance of numerous cell surface proteins associated with processes that include cell migration, cell adhesion, nutrient supply and cell signaling. Involved in copper-dependent ATP7A trafficking between the trans-Golgi network and vesicles in the cell periphery; the function is proposed to depend on its association with the CCC complex and cooperation with the WASH complex on early endosomes. Seems not to be required for CCC complex stability. Functionally, (Microbial infection) The heterotrimeric retriever complex, in collaboration with the CCC complex, mediates the exit of human papillomavirus to the cell surface. The polypeptide is VPS35 endosomal protein-sorting factor-like (Homo sapiens (Human)).